The chain runs to 226 residues: ATP synthase F(0) complex subunit a (226 aa).

The next 6 membrane-spanning stretches (helical) occupy residues Phe6 to Phe26, Trp68 to Leu88, Gln97 to Phe117, Ile138 to Val158, Ile164 to Ile184, and Ala189 to Ile209.

This sequence belongs to the ATPase A chain family. Component of the ATP synthase complex composed at least of ATP5F1A/subunit alpha, ATP5F1B/subunit beta, ATP5MC1/subunit c (homooctomer), MT-ATP6/subunit a, MT-ATP8/subunit 8, ATP5ME/subunit e, ATP5MF/subunit f, ATP5MG/subunit g, ATP5MK/subunit k, ATP5MJ/subunit j, ATP5F1C/subunit gamma, ATP5F1D/subunit delta, ATP5F1E/subunit epsilon, ATP5PF/subunit F6, ATP5PB/subunit b, ATP5PD/subunit d, ATP5PO/subunit OSCP. ATP synthase complex consists of a soluble F(1) head domain (subunits alpha(3) and beta(3)) - the catalytic core - and a membrane F(0) domain - the membrane proton channel (subunits c, a, 8, e, f, g, k and j). These two domains are linked by a central stalk (subunits gamma, delta, and epsilon) rotating inside the F1 region and a stationary peripheral stalk (subunits F6, b, d, and OSCP). Interacts with DNAJC30; interaction is direct.

The protein localises to the mitochondrion inner membrane. It carries out the reaction H(+)(in) = H(+)(out). In terms of biological role, subunit a, of the mitochondrial membrane ATP synthase complex (F(1)F(0) ATP synthase or Complex V) that produces ATP from ADP in the presence of a proton gradient across the membrane which is generated by electron transport complexes of the respiratory chain. ATP synthase complex consist of a soluble F(1) head domain - the catalytic core - and a membrane F(1) domain - the membrane proton channel. These two domains are linked by a central stalk rotating inside the F(1) region and a stationary peripheral stalk. During catalysis, ATP synthesis in the catalytic domain of F(1) is coupled via a rotary mechanism of the central stalk subunits to proton translocation. With the subunit c (ATP5MC1), forms the proton-conducting channel in the F(0) domain, that contains two crucial half-channels (inlet and outlet) that facilitate proton movement from the mitochondrial intermembrane space (IMS) into the matrix. Protons are taken up via the inlet half-channel and released through the outlet half-channel, following a Grotthuss mechanism. This chain is ATP synthase F(0) complex subunit a, found in Rattus norvegicus (Rat).